Consider the following 282-residue polypeptide: Pantothenate synthetase (282 aa).

Met-31 to His-38 contributes to the ATP binding site. Residue His-38 is the Proton donor of the active site. Residue Gln-62 coordinates (R)-pantoate. Gln-62 provides a ligand contact to beta-alanine. Gly-148–Asp-151 serves as a coordination point for ATP. Gln-154 serves as a coordination point for (R)-pantoate. ATP-binding positions include Val-177 and Lys-185–Arg-188.

Belongs to the pantothenate synthetase family. As to quaternary structure, homodimer.

The protein resides in the cytoplasm. The catalysed reaction is (R)-pantoate + beta-alanine + ATP = (R)-pantothenate + AMP + diphosphate + H(+). The protein operates within cofactor biosynthesis; (R)-pantothenate biosynthesis; (R)-pantothenate from (R)-pantoate and beta-alanine: step 1/1. Its function is as follows. Catalyzes the condensation of pantoate with beta-alanine in an ATP-dependent reaction via a pantoyl-adenylate intermediate. This Staphylococcus saprophyticus subsp. saprophyticus (strain ATCC 15305 / DSM 20229 / NCIMB 8711 / NCTC 7292 / S-41) protein is Pantothenate synthetase.